The primary structure comprises 267 residues: Protein BMH1 (267 aa).

N-acetylserine is present on serine 2. Residue lysine 76 forms a Glycyl lysine isopeptide (Lys-Gly) (interchain with G-Cter in ubiquitin) linkage. Phosphoserine is present on serine 89. Positions 236–267 (DMSESGQAEDQQQQQQHQQQQPPAAAEGEAPK) are disordered. Residues 243-267 (AEDQQQQQQHQQQQPPAAAEGEAPK) are compositionally biased toward low complexity.

The protein belongs to the 14-3-3 family. In terms of assembly, homodimer. Interacts with NTH1 (via N-terminus when phosphorylated by PKA); the interaction is direct and activates NTH1. Interacts with FIN1.

Its function is as follows. Involved in growth regulation. The protein is Protein BMH1 (BMH1) of Saccharomyces cerevisiae (strain ATCC 204508 / S288c) (Baker's yeast).